The following is a 186-amino-acid chain: MGRYAKEPDNPAKSCKARGSNLRVHFKNTRETALAIKRMPLRRAQKFLKNVCEKKECVPFRRFNGGVGRCAQAKHWNTSVGRWPKKSAEFLLQLLKNAEANADYRGLDVDRLVVDHIQVNRAPCLRRRTYRAHGRINPYMSSPCHIELSLTEKEDVVTKAAENEPAKKKLSKKKLQRQKEKMMRNE.

Residues 160–186 (AAENEPAKKKLSKKKLQRQKEKMMRNE) form a disordered region. The segment covering 177–186 (RQKEKMMRNE) has biased composition (basic and acidic residues).

The protein belongs to the universal ribosomal protein uL22 family.

This chain is Large ribosomal subunit protein uL22 (RpL17), found in Aedes aegypti (Yellowfever mosquito).